The sequence spans 176 residues: Pituitary adenylate cyclase-activating polypeptide (176 aa).

The first 24 residues, 1–24 (MTMCSGARLALLVYGILMHSSVYG), serve as a signal peptide directing secretion. Residues 25–80 (SPAASGLRFPGIRPENEVYDEDGNPQQDFYDSESLGVGSPASALRDAYALYYPAEE) constitute a propeptide that is removed on maturation. The segment at 98-135 (QPSARRSPADAHGQGLGWDPGGSADDDSEPLSKRHSDG) is disordered. Residues 150 to 158 (VKKYLAAVL) are important for receptor binding. A Leucine amide modification is found at Leu158. Lys169 carries the post-translational modification Lysine amide. Residues 173 to 176 (IPYL) constitute a propeptide that is removed on maturation.

Belongs to the glucagon family. As to quaternary structure, interacts with ADCYAP1R1 (via N-terminal extracellular domain); both PACAP27 and PACAP38 neuropeptides function as ligand for the ADCYAP1R1 receptor, which modulates the activity of downstream effectors. Interacts with VIPR1 and VIPR2; functions as ligand for VIPR1 and VIPR2 receptors, which modulate the activity of downstream effectors.

The protein resides in the secreted. Its function is as follows. PACAP is a neuropeptide involved in diverse array of physiological processes through activating the PACAP subfamily of class B1 G protein-coupled receptors: VIP receptor 1 (VIPR1), VIP receptor 2 (VIPR2), and PACAP type I receptor (ADCYAP1R1). Exerts neuroprotective and general cytoprotective effects due to anti-apoptotic, anti-inflammatory, and antioxidant actions. Promotes neuron projection development through the RAPGEF2/Rap1/B-Raf/ERK pathway. In chromaffin cells, induces long-lasting increase of intracellular calcium concentrations and neuroendocrine secretion. Involved in the control of glucose homeostasis, induces insulin secretion by pancreatic beta cells. PACAP exists in two bioactive forms from proteolysis of the same precursor protein, PACAP27 and PACAP38, which differ by eleven amino acid residues in the C-terminus. The chain is Pituitary adenylate cyclase-activating polypeptide (ADCYAP1) from Bos taurus (Bovine).